Reading from the N-terminus, the 420-residue chain is uncharacterized protein (420 aa).

The VWFA domain occupies 43–215 (NLCLVLDHSG…HTFRQLFQRM (173 aa)). Positions 389-420 (LQSGEDLSEGDRKKTRMVSKTTLQPPSAPSEH) are disordered.

This is an uncharacterized protein from Synechocystis sp. (strain ATCC 27184 / PCC 6803 / Kazusa).